A 121-amino-acid polypeptide reads, in one-letter code: Large ribosomal subunit protein uL18 (121 aa).

It belongs to the universal ribosomal protein uL18 family. As to quaternary structure, part of the 50S ribosomal subunit; part of the 5S rRNA/L5/L18/L25 subcomplex. Contacts the 5S and 23S rRNAs.

In terms of biological role, this is one of the proteins that bind and probably mediate the attachment of the 5S RNA into the large ribosomal subunit, where it forms part of the central protuberance. The sequence is that of Large ribosomal subunit protein uL18 from Herpetosiphon aurantiacus (strain ATCC 23779 / DSM 785 / 114-95).